Here is a 627-residue protein sequence, read N- to C-terminus: Protein fem-1 homolog B (627 aa).

4 ANK repeats span residues 45–74 (QRST…VQTQ), 87–116 (DGAT…NVNH), 120–149 (TNST…NISI), and 153–182 (YDNT…DPNA). Residues H185, C186, and H218 each contribute to the Zn(2+) site. 2 ANK repeats span residues 186–215 (CGAT…AIVV) and 218–248 (HGMT…DRRS). The stretch at 344–377 (SHPIIYRGAVYADNMEFEQCIKLWLHALHLRQKG) is one TPR repeat. ANK repeat units lie at residues 483-527 (EGFT…EVNA) and 531-568 (EGNS…HTDM).

Belongs to the fem-1 family. Component of a CRL2 E3 ubiquitin-protein ligase complex, also named ECS (Elongin BC-CUL2/5-SOCS-box protein) complex, composed of CUL2, Elongin BC (ELOB and ELOC), RBX1 and substrate-specific adapter FEM1B. Homooligomer. Interacts with PPM1F and PHTF1. Interacts with the death domain of FAS/TNFRSF6 and TNFRSF1A. Interacts with CHEK1. Interacts with NKX3-1. Present in adult testis (at protein level).

The protein localises to the cytoplasm. It is found in the nucleus. It participates in protein modification; protein ubiquitination. Activity of the CRL2(FEM1B) complex toward FNIP1 is inhibited by BEX family proteins (BEX1, BEX2, BEX3 and/or BEX4) in absence of reductive stress. Mechanistically, BEX proteins act as pseudosubstrate inhibitors that associate with FEM1B via zinc in absence of reductive stress, thereby preventing association between FEM1B and FNIP1. Substrate-recognition component of a Cul2-RING (CRL2) E3 ubiquitin-protein ligase complex of the DesCEND (destruction via C-end degrons) pathway, which recognizes a C-degron located at the extreme C terminus of target proteins, leading to their ubiquitination and degradation. The C-degron recognized by the DesCEND pathway is usually a motif of less than ten residues and can be present in full-length proteins, truncated proteins or proteolytically cleaved forms. The CRL2(FEM1B) complex specifically recognizes proteins ending with -Gly-Leu-Asp-Arg, such as CDK5R1, leading to their ubiquitination and degradation. Also acts as a regulator of the reductive stress response by mediating ubiquitination of reduced FNIP1: in response to reductive stress, the CRL2(FEM1B) complex specifically recognizes a conserved Cys degron in FNIP1 when this degron is reduced, leading to FNIP1 degradation and subsequent activation of mitochondria to recalibrate reactive oxygen species (ROS). Mechanistically, recognizes and binds reduced FNIP1 through two interface zinc ions, which act as a molecular glue that recruit reduced FNIP1 to FEM1B. Promotes ubiquitination of GLI1, suppressing GLI1 transcriptional activator activity. Promotes ubiquitination and degradation of ANKRD37. Promotes ubiquitination and degradation of SLBP. Involved in apoptosis by acting as a death receptor-associated protein that mediates apoptosis. Also involved in glucose homeostasis in pancreatic islet. May also act as an adapter/mediator in replication stress-induced signaling that leads to the activation of CHEK1. This chain is Protein fem-1 homolog B, found in Rattus norvegicus (Rat).